Consider the following 119-residue polypeptide: Large ribosomal subunit protein uL18 (119 aa).

It belongs to the universal ribosomal protein uL18 family. In terms of assembly, part of the 50S ribosomal subunit; part of the 5S rRNA/L5/L18/L25 subcomplex. Contacts the 5S and 23S rRNAs.

Its function is as follows. This is one of the proteins that bind and probably mediate the attachment of the 5S RNA into the large ribosomal subunit, where it forms part of the central protuberance. This is Large ribosomal subunit protein uL18 from Malacoplasma penetrans (strain HF-2) (Mycoplasma penetrans).